The sequence spans 277 residues: Thiazole synthase (277 aa).

The active-site Schiff-base intermediate with DXP is Lys-107. Residues Gly-168, 194 to 195 (AG), and 216 to 217 (AS) contribute to the 1-deoxy-D-xylulose 5-phosphate site.

The protein belongs to the ThiG family. As to quaternary structure, homotetramer. Forms heterodimers with either ThiH or ThiS.

Its subcellular location is the cytoplasm. The enzyme catalyses [ThiS sulfur-carrier protein]-C-terminal-Gly-aminoethanethioate + 2-iminoacetate + 1-deoxy-D-xylulose 5-phosphate = [ThiS sulfur-carrier protein]-C-terminal Gly-Gly + 2-[(2R,5Z)-2-carboxy-4-methylthiazol-5(2H)-ylidene]ethyl phosphate + 2 H2O + H(+). It participates in cofactor biosynthesis; thiamine diphosphate biosynthesis. Catalyzes the rearrangement of 1-deoxy-D-xylulose 5-phosphate (DXP) to produce the thiazole phosphate moiety of thiamine. Sulfur is provided by the thiocarboxylate moiety of the carrier protein ThiS. In vitro, sulfur can be provided by H(2)S. This Cutibacterium acnes (strain DSM 16379 / KPA171202) (Propionibacterium acnes) protein is Thiazole synthase.